A 464-amino-acid chain; its full sequence is Glutamate--tRNA ligase (464 aa).

The 'HIGH' region motif lies at 10-20 (PSPTGYLHIGG). Over residues 113 to 130 (QEAKKEKPRYDGRWRPEA) the composition is skewed to basic and acidic residues. A disordered region spans residues 113–142 (QEAKKEKPRYDGRWRPEAGKALPVPPTDVP). The 'KMSKS' region motif lies at 242-246 (KLSKR). Lys-245 is an ATP binding site.

This sequence belongs to the class-I aminoacyl-tRNA synthetase family. Glutamate--tRNA ligase type 1 subfamily. Monomer.

It is found in the cytoplasm. It catalyses the reaction tRNA(Glu) + L-glutamate + ATP = L-glutamyl-tRNA(Glu) + AMP + diphosphate. In terms of biological role, catalyzes the attachment of glutamate to tRNA(Glu) in a two-step reaction: glutamate is first activated by ATP to form Glu-AMP and then transferred to the acceptor end of tRNA(Glu). The polypeptide is Glutamate--tRNA ligase (Dechloromonas aromatica (strain RCB)).